We begin with the raw amino-acid sequence, 101 residues long: Small ribosomal subunit protein uS14 (101 aa).

Belongs to the universal ribosomal protein uS14 family. Part of the 30S ribosomal subunit. Contacts proteins S3 and S10.

Functionally, binds 16S rRNA, required for the assembly of 30S particles and may also be responsible for determining the conformation of the 16S rRNA at the A site. The protein is Small ribosomal subunit protein uS14 of Rhizobium johnstonii (strain DSM 114642 / LMG 32736 / 3841) (Rhizobium leguminosarum bv. viciae).